A 362-amino-acid polypeptide reads, in one-letter code: Lactosylceramide alpha-2,3-sialyltransferase (362 aa).

The Cytoplasmic portion of the chain corresponds to 1-5; sequence MRRPS. The chain crosses the membrane as a helical; Signal-anchor for type II membrane protein span at residues 6 to 26; that stretch reads LLLKDILKCTLLVFGVWILYI. Over 27–362 the chain is Lumenal; the sequence is LKLNYTTEEC…DLSGGIDREF (336 aa). 4 N-linked (GlcNAc...) asparagine glycosylation sites follow: asparagine 30, asparagine 180, asparagine 224, and asparagine 334. Cysteine 139 and cysteine 297 are joined by a disulfide.

It belongs to the glycosyltransferase 29 family.

Its subcellular location is the golgi apparatus membrane. It catalyses the reaction a beta-D-Gal-(1-&gt;4)-beta-D-Glc-(1&lt;-&gt;1)-Cer(d18:1(4E)) + CMP-N-acetyl-beta-neuraminate = a ganglioside GM3 (d18:1(4E)) + CMP + H(+). The catalysed reaction is ganglioside GA2 (d18:1(4E)/18:0) + CMP-N-acetyl-beta-neuraminate = ganglioside GM2 (d18:1(4E)/18:0) + CMP + H(+). The enzyme catalyses a beta-D-Gal-(1&lt;-&gt;1')-ceramide + CMP-N-acetyl-beta-neuraminate = N-acetyl-alpha-neuraminosyl-(2-&gt;3)-beta-D-galactosyl-(1&lt;-&gt;1')-ceramide + CMP + H(+). It carries out the reaction ganglioside GA1 (d18:1(4E)/18:0) + CMP-N-acetyl-beta-neuraminate = ganglioside GM1 (d18:1(4E)/18:0) + CMP + H(+). Functionally, transfers the sialyl group (N-acetyl-alpha-neuraminyl or NeuAc) from CMP-NeuAc to the non-reducing terminal galactose (Gal) of glycosphingolipids forming gangliosides (important molecules involved in the regulation of multiple cellular processes, including cell proliferation and differentiation, apoptosis, embryogenesis, development, and oncogenesis). Mainly involved in the biosynthesis of ganglioside GM3 but can also use different glycolipids as substrate acceptors such as D-galactosylceramide (GalCer), asialo-GM2 (GA2) and asialo-GM1 (GA1), although less preferentially than beta-D-Gal-(1-&gt;4)-beta-D-Glc-(1&lt;-&gt;1)-Cer (LacCer). This is Lactosylceramide alpha-2,3-sialyltransferase (ST3GAL5) from Pan troglodytes (Chimpanzee).